Here is a 1121-residue protein sequence, read N- to C-terminus: Pleckstrin homology domain-containing family A member 7 (1121 aa).

2 consecutive WW domains span residues 9–42 (DTLPEHWSYGVCRDGRVFFINDQLRCTTWLHPRT) and 54–87 (SDLPRGWEEGFTEEGASYFIDHNQQTTAFRHPVT). The tract at residues 105-137 (PHMSKQDRNQRPSSMVSETSTAGTASTLEAKPG) is disordered. Residues 115–131 (RPSSMVSETSTAGTAST) show a composition bias toward polar residues. Residues 164-282 (PVVVRGWLHK…WVRAMNQAAQ (119 aa)) form the PH domain. Residues 299–514 (QAVPQANHTE…LKMSSEERRA (216 aa)) are disordered. 2 stretches are compositionally biased toward basic and acidic residues: residues 308–356 (ESCH…EGKR) and 437–446 (HWARAQKGDS). The span at 460–475 (PGQSLSFPENYQTLPK) shows a compositional bias: polar residues. A compositionally biased stretch (basic and acidic residues) spans 497 to 514 (YAQDRASHLKMSSEERRA). 6 positions are modified to phosphoserine: S536, S545, S569, S604, S608, and S612. The segment at 538 to 696 (TAPICLGSPE…AESDTDVKLS (159 aa)) is interaction with CTNND1. A disordered region spans residues 547–632 (EFTDQGRSRS…NSSHVDRRSM (86 aa)). The segment covering 567 to 582 (PPSPSDIPPPGPPRVF) has biased composition (pro residues). A compositionally biased stretch (basic and acidic residues) spans 589 to 605 (TPAERVTVKPPDQRRSV). Positions 700–801 (EQDRVLQDLE…LQEQHRRAFF (102 aa)) form a coiled coil. Disordered regions lie at residues 841 to 876 (RKTVPLFPHPPVPSLSTSESKPPPQPSPPTSPVRTP) and 888 to 971 (YVPY…ELGQ). Residues S858, S860, and S867 each carry the phosphoserine modification. Over residues 861-871 (KPPPQPSPPTS) the composition is skewed to pro residues. Position 870 is a phosphothreonine (T870). Residues S871, S903, and S907 each carry the phosphoserine modification. The span at 933 to 942 (DQPPAVPPLP) shows a compositional bias: pro residues. Over residues 958–969 (RQSDERKRDREL) the composition is skewed to basic and acidic residues. Phosphoserine is present on S986. 2 disordered regions span residues 1003 to 1028 (GLVGPESRYQTLPGRGLSGSTSRLQQ) and 1082 to 1121 (RHQKALVRERKRTLGQGERTGLPSSRYLSRPLPGDLGSVC). Positions 1067 to 1094 (QRGKMSAEEQLERMKRHQKALVRERKRT) form a coiled coil. The span at 1082-1094 (RHQKALVRERKRT) shows a compositional bias: basic residues.

Interacts with CAMSAP3 and CTNND1. Interacts (via WW domains) with TSPAN33 (via cytoplasmic domain) and with PDZD11; the interaction with TSPAN33 is dependent on PDZD11 being bound to PLEKHA7 and facilitates the docking of ADAM10 to zonula adherens through interaction of TSPAN33 with ADAM10.

Its subcellular location is the cell junction. It is found in the adherens junction. It localises to the cytoplasm. The protein localises to the cytoskeleton. The protein resides in the microtubule organizing center. Its subcellular location is the centrosome. Its function is as follows. Required for zonula adherens biogenesis and maintenance. Acts via its interaction with CAMSAP3, which anchors microtubules at their minus-ends to zonula adherens, leading to the recruitment of KIFC3 kinesin to the junctional site. Mediates docking of ADAM10 to zonula adherens through a PDZD11-dependent interaction with the ADAM10-binding protein TSPAN33. In Homo sapiens (Human), this protein is Pleckstrin homology domain-containing family A member 7 (PLEKHA7).